The chain runs to 753 residues: Rho guanine nucleotide exchange factor gef1 (753 aa).

Disordered regions lie at residues 52–150 (SNSY…DRNR), 175–194 (TLRK…RVSG), and 200–245 (AQNS…ASLL). Composition is skewed to polar residues over residues 94-105 (DPQTPNTPPVSS), 114-141 (GSFN…TLTP), 181-191 (TNTSSNGTSRR), and 200-220 (AQNS…GSST). Over residues 230–245 (TLASMPSSHSSTASLL) the composition is skewed to low complexity. In terms of domain architecture, DH spans 311 to 507 (KRANLIKELV…QELISGINQK (197 aa)).

As to quaternary structure, interacts with cdc42.

It localises to the cytoplasm. Functionally, has a role in the control of cell polarity and cytokinesis. Involved in bipolar growth, via modulation of cdc42-shk1-orb6 signaling, and septum formation. Stimulates guanine nucleotide exchange of cdc42. This is Rho guanine nucleotide exchange factor gef1 (gef1) from Schizosaccharomyces pombe (strain 972 / ATCC 24843) (Fission yeast).